The following is a 382-amino-acid chain: F-box protein At3g27290 (382 aa).

Residues 16–105 (RKLELGLGEF…VDQMLFETLS (90 aa)) enclose the F-box domain.

The protein is F-box protein At3g27290 of Arabidopsis thaliana (Mouse-ear cress).